A 122-amino-acid polypeptide reads, in one-letter code: Ribosome-binding factor A (122 aa).

It belongs to the RbfA family. As to quaternary structure, monomer. Binds 30S ribosomal subunits, but not 50S ribosomal subunits or 70S ribosomes.

It is found in the cytoplasm. In terms of biological role, one of several proteins that assist in the late maturation steps of the functional core of the 30S ribosomal subunit. Associates with free 30S ribosomal subunits (but not with 30S subunits that are part of 70S ribosomes or polysomes). Required for efficient processing of 16S rRNA. May interact with the 5'-terminal helix region of 16S rRNA. The protein is Ribosome-binding factor A of Moorella thermoacetica (strain ATCC 39073 / JCM 9320).